Here is a 323-residue protein sequence, read N- to C-terminus: Prenyl transferase (323 aa).

Isopentenyl diphosphate is bound by residues lysine 46, arginine 49, and histidine 81. Mg(2+) contacts are provided by aspartate 88 and aspartate 92. Residue arginine 97 participates in an all-trans-polyprenyl diphosphate binding. An isopentenyl diphosphate-binding site is contributed by arginine 98. Positions 174, 175, and 212 each coordinate an all-trans-polyprenyl diphosphate.

It belongs to the FPP/GGPP synthase family. Requires Mg(2+) as cofactor.

The protein localises to the plastid. The protein resides in the cyanelle. Possible role in synthesis of the nonaprenyl side chain of plastoquinone or in synthesis of other prenyl chains such as undekaprenyl pyrophosphate. This Cyanophora paradoxa protein is Prenyl transferase (preA).